Here is a 559-residue protein sequence, read N- to C-terminus: Extracellular matrix protein 1 (559 aa).

An N-terminal signal peptide occupies residues Met1–Ala19. 2 consecutive repeat copies span residues His170–Tyr298 and Pro302–Tyr424. A 2 X approximate repeats region spans residues His170–Tyr424. N-linked (GlcNAc...) asparagine glycosylation occurs at Asn373. 2 N-linked (GlcNAc...) (high mannose) asparagine glycosylation sites follow: Asn463 and Asn535. A disordered region spans residues Asn535 to Glu559. Ser556 is subject to Phosphoserine.

As to quaternary structure, interacts (via C-terminus) with HSPG2 (via C-terminus). Interacts with EFEMP1/FBLN3 and LAMB3. Interacts with MMP9. Expressed in the surrounding connective tissues of developing long bones, but not in the cartilage. The long isoform is expressed in a number of tissues including liver, heart and lungs. The short isoform is expressed in skin and cartilage-containing tissues such as tail and front paw. No expression is found in brain.

The protein localises to the secreted. The protein resides in the extracellular space. It is found in the extracellular matrix. Functionally, involved in endochondral bone formation as negative regulator of bone mineralization. Stimulates the proliferation of endothelial cells and promotes angiogenesis. Inhibits MMP9 proteolytic activity. This is Extracellular matrix protein 1 (Ecm1) from Mus musculus (Mouse).